The sequence spans 230 residues: Uracil-DNA glycosylase (230 aa).

Residue Asp-72 is the Proton acceptor of the active site.

This sequence belongs to the uracil-DNA glycosylase (UDG) superfamily. UNG family.

Its subcellular location is the cytoplasm. The catalysed reaction is Hydrolyzes single-stranded DNA or mismatched double-stranded DNA and polynucleotides, releasing free uracil.. Functionally, excises uracil residues from the DNA which can arise as a result of misincorporation of dUMP residues by DNA polymerase or due to deamination of cytosine. The chain is Uracil-DNA glycosylase from Wolinella succinogenes (strain ATCC 29543 / DSM 1740 / CCUG 13145 / JCM 31913 / LMG 7466 / NCTC 11488 / FDC 602W) (Vibrio succinogenes).